The sequence spans 330 residues: MSAASAFAMNAPSFVNASSLKKASTSARSGVLSARFTCNSSSSSSSSATPPSLIRNEPVFAAPAPIITPNWTEDGNESYEEAIDALKKTLIEKGELEPVAATRIDQITAQAAAPDTKAPFDPVERIKSGFVKFKTEKFVTNPALYDELAKGQSPKFMVFACSDSRVCPSHVLDFQPGEAFVVRNVANMVPPFDKTKYSGVGAAVEYAVLHLKVQEIFVIGHSRCGGIKGLMTFPDEGPHSTDFIEDWVKVCLPAKSKVVAEHNGTHLDDQCVLCEKEAVNVSLGNLLTYPFVRDGLRNKTLALKGGHYDFVNGTFELWALDFGLSSPTSV.

The interval 1–109 is chloroplast transit peptide-like; it reads MSAASAFAMN…AATRIDQITA (109 aa).

The protein belongs to the beta-class carbonic anhydrase family.

Its subcellular location is the cytoplasm. It carries out the reaction hydrogencarbonate + H(+) = CO2 + H2O. Functionally, reversible hydration of carbon dioxide. This Flaveria bidentis (Coastal plain yellowtops) protein is Carbonic anhydrase.